A 286-amino-acid polypeptide reads, in one-letter code: 4-diphosphocytidyl-2-C-methyl-D-erythritol kinase (286 aa).

Residue Lys11 is part of the active site. 94–104 (PMGGGIGGGSS) lines the ATP pocket. Asp136 is a catalytic residue.

The protein belongs to the GHMP kinase family. IspE subfamily.

The catalysed reaction is 4-CDP-2-C-methyl-D-erythritol + ATP = 4-CDP-2-C-methyl-D-erythritol 2-phosphate + ADP + H(+). The protein operates within isoprenoid biosynthesis; isopentenyl diphosphate biosynthesis via DXP pathway; isopentenyl diphosphate from 1-deoxy-D-xylulose 5-phosphate: step 3/6. Its function is as follows. Catalyzes the phosphorylation of the position 2 hydroxy group of 4-diphosphocytidyl-2C-methyl-D-erythritol. The chain is 4-diphosphocytidyl-2-C-methyl-D-erythritol kinase from Pseudomonas putida (strain W619).